The sequence spans 305 residues: tRNA pseudouridine synthase B (305 aa).

Asp48 functions as the Nucleophile in the catalytic mechanism.

It belongs to the pseudouridine synthase TruB family. Type 1 subfamily.

It carries out the reaction uridine(55) in tRNA = pseudouridine(55) in tRNA. In terms of biological role, responsible for synthesis of pseudouridine from uracil-55 in the psi GC loop of transfer RNAs. The sequence is that of tRNA pseudouridine synthase B from Pseudomonas syringae pv. syringae (strain B728a).